A 158-amino-acid polypeptide reads, in one-letter code: DNA-binding transcriptional repressor RacR (158 aa).

In terms of assembly, homooctamer.

Its function is as follows. Transcriptional regulator that represses the expression of ydaS and ydaT under normal physiological conditions. It binds to its own upstream sequence and represses the adjacent and divergently coded ydaS-ydaT operon. RacR-mediated down-regulation of ydaS and ydaT may be critical for cell survival. RacR ensures that the prophage DNA is maintained in the genome. When the expression of the racR gene is reduced, the prophage Rac is excised from the genome, possibly to counteract the lethal toxicity of YdaT. This chain is DNA-binding transcriptional repressor RacR (racR), found in Escherichia coli (strain K12).